Reading from the N-terminus, the 313-residue chain is Ribosomal RNA small subunit methyltransferase H (313 aa).

Residues 35-37, D55, F79, D100, and Q107 contribute to the S-adenosyl-L-methionine site; that span reads GGH.

This sequence belongs to the methyltransferase superfamily. RsmH family.

It localises to the cytoplasm. It carries out the reaction cytidine(1402) in 16S rRNA + S-adenosyl-L-methionine = N(4)-methylcytidine(1402) in 16S rRNA + S-adenosyl-L-homocysteine + H(+). Specifically methylates the N4 position of cytidine in position 1402 (C1402) of 16S rRNA. This chain is Ribosomal RNA small subunit methyltransferase H, found in Burkholderia thailandensis (strain ATCC 700388 / DSM 13276 / CCUG 48851 / CIP 106301 / E264).